Reading from the N-terminus, the 112-residue chain is U15-hexatoxin-Hi1a (112 aa).

An N-terminal signal peptide occupies residues 1 to 18 (MNTLIAFAVLLLLSTTLG). A propeptide spanning residues 19 to 73 (DTDDKVSHEEIQERKELSGISEELLLQQLEAVEAALMEKERLEEMEEDGNSREKR) is cleaved from the precursor. 3 cysteine pairs are disulfide-bonded: cysteine 74–cysteine 88, cysteine 81–cysteine 93, and cysteine 87–cysteine 107.

Belongs to the neurotoxin 14 (magi-1) family. 08 (Ltx-4) subfamily. Expressed by the venom gland.

It localises to the secreted. Probable ion channel inhibitor. The chain is U15-hexatoxin-Hi1a from Hadronyche infensa (Fraser island funnel-web spider).